The chain runs to 247 residues: ATP synthase subunit a, chloroplastic (247 aa).

A run of 5 helical transmembrane segments spans residues 38–58 (QVLI…IIAV), 95–115 (VPFI…GALL), 133–153 (DINT…YAGL), 199–219 (LVVV…VMFL), and 220–240 (GLFT…AYIG).

The protein belongs to the ATPase A chain family. As to quaternary structure, F-type ATPases have 2 components, CF(1) - the catalytic core - and CF(0) - the membrane proton channel. CF(1) has five subunits: alpha(3), beta(3), gamma(1), delta(1), epsilon(1). CF(0) has four main subunits: a, b, b' and c.

The protein resides in the plastid. It localises to the chloroplast thylakoid membrane. In terms of biological role, key component of the proton channel; it plays a direct role in the translocation of protons across the membrane. The chain is ATP synthase subunit a, chloroplastic from Phalaenopsis aphrodite subsp. formosana (Moth orchid).